A 385-amino-acid polypeptide reads, in one-letter code: Chaperone protein DnaJ (385 aa).

Positions 5–70 (DFYDVLGVSR…QSRAAYDQFG (66 aa)) constitute a J domain. The CR-type zinc finger occupies 143-221 (GKKAQVRVPG…CHGAGRVEKE (79 aa)). 8 residues coordinate Zn(2+): Cys156, Cys159, Cys173, Cys176, Cys195, Cys198, Cys209, and Cys212. CXXCXGXG motif repeat units follow at residues 156–163 (CEVCTGTG), 173–180 (CPTCQGHG), 195–202 (CPTCHGRG), and 209–216 (CTNCHGAG).

This sequence belongs to the DnaJ family. In terms of assembly, homodimer. The cofactor is Zn(2+).

It localises to the cytoplasm. Participates actively in the response to hyperosmotic and heat shock by preventing the aggregation of stress-denatured proteins and by disaggregating proteins, also in an autonomous, DnaK-independent fashion. Unfolded proteins bind initially to DnaJ; upon interaction with the DnaJ-bound protein, DnaK hydrolyzes its bound ATP, resulting in the formation of a stable complex. GrpE releases ADP from DnaK; ATP binding to DnaK triggers the release of the substrate protein, thus completing the reaction cycle. Several rounds of ATP-dependent interactions between DnaJ, DnaK and GrpE are required for fully efficient folding. Also involved, together with DnaK and GrpE, in the DNA replication of plasmids through activation of initiation proteins. This Parvibaculum lavamentivorans (strain DS-1 / DSM 13023 / NCIMB 13966) protein is Chaperone protein DnaJ.